We begin with the raw amino-acid sequence, 176 residues long: NAD(P)H-quinone oxidoreductase subunit 6, chloroplastic (176 aa).

5 consecutive transmembrane segments (helical) span residues 10–30 (FLLV…VLLP), 32–52 (PIFS…LYIL), 61–81 (AQLL…VMFM), 92–112 (LWTV…FSLL), and 152–172 (FFLP…GAIS).

The protein belongs to the complex I subunit 6 family. In terms of assembly, NDH is composed of at least 16 different subunits, 5 of which are encoded in the nucleus.

It is found in the plastid. The protein localises to the chloroplast thylakoid membrane. It carries out the reaction a plastoquinone + NADH + (n+1) H(+)(in) = a plastoquinol + NAD(+) + n H(+)(out). The catalysed reaction is a plastoquinone + NADPH + (n+1) H(+)(in) = a plastoquinol + NADP(+) + n H(+)(out). Functionally, NDH shuttles electrons from NAD(P)H:plastoquinone, via FMN and iron-sulfur (Fe-S) centers, to quinones in the photosynthetic chain and possibly in a chloroplast respiratory chain. The immediate electron acceptor for the enzyme in this species is believed to be plastoquinone. Couples the redox reaction to proton translocation, and thus conserves the redox energy in a proton gradient. This chain is NAD(P)H-quinone oxidoreductase subunit 6, chloroplastic (ndhG), found in Lepidium virginicum (Virginia pepperweed).